A 439-amino-acid polypeptide reads, in one-letter code: Nitroalkane oxidase (439 aa).

FAD-binding positions include 131 to 134, 139 to 141, 169 to 171, Arg304, 313 to 314, 375 to 379, and 400 to 404; these read LMHS, TAN, WPS, HQ, KAVGM, and LFDGG. The active-site Proton acceptor is the Asp402.

Belongs to the acyl-CoA dehydrogenase family. In terms of assembly, homotetramer. Requires FAD as cofactor.

It carries out the reaction a primary nitroalkane + O2 + H2O = an aldehyde + nitrite + H2O2 + H(+). The catalysed reaction is a secondary nitroalkane + O2 + H2O = a ketone + nitrite + H2O2 + H(+). Its activity is regulated as follows. Strongly inhibited by mercury chloride and KCN. Its function is as follows. Catalyzes the oxidative denitrification of neutral nitroalkanes, including 3-nitro-2-pentanol, 1-nitropropane, 2-nitropropane, nitroethane and nitrocyclohexane, and may thereby protect the organism against toxic compounds. Has no detectable acyl-CoA dehydrogenase activity. In Fusarium oxysporum (Fusarium vascular wilt), this protein is Nitroalkane oxidase.